The sequence spans 216 residues: Hexitol phosphatase A (216 aa).

The Nucleophile role is filled by Asp9. Positions 9 and 11 each coordinate a divalent metal cation. Substrate-binding positions include 9 to 11 (DLD), 106 to 107 (TS), and Lys138. Catalysis depends on Asp11, which acts as the Proton donor. Asp163 is a binding site for a divalent metal cation.

It belongs to the HAD-like hydrolase superfamily. CbbY/CbbZ/Gph/YieH family. Mg(2+) is required as a cofactor. Requires Mn(2+) as cofactor. Co(2+) serves as cofactor.

It catalyses the reaction sugar phosphate + H2O = sugar + phosphate.. It carries out the reaction D-mannitol 1-phosphate + H2O = D-mannitol + phosphate. The catalysed reaction is D-sorbitol 6-phosphate + H2O = D-sorbitol + phosphate. In terms of biological role, sugar-phosphate phosphohydrolase that appears to contribute to butanol tolerance. Catalyzes the dephosphorylation of D-mannitol 1-phosphate and D-sorbitol 6-phosphate. Is also able to dephosphorylate other sugar phosphates in vitro including ribose-5-phosphate (Rib5P), 2-deoxyribose-5-phosphate, fructose-1-phosphate (Fru1P), fructose-6-phosphate (Fru6P), and glucose-6-phosphate (Glu6P). Selectively hydrolyzes beta-D-glucose-1-phosphate (bGlu1P) and has no activity with the alpha form. The chain is Hexitol phosphatase A from Escherichia coli (strain K12).